The following is a 496-amino-acid chain: MKKYILSLDQGTTSSRAILFNKKGEIVHSAQKEFTQHFPKPGWVEHNAQEIWGSILAVIATCLSEADVKPEQIAGIGITNQRETTVVWDKTTSKPIYNAIVWQSRQTAEICDELKEKGYSEMVREKTGLLIDAYFSGTKVKWILDNVEGAREKAENGDLLFGTIDSWLVWKLSGGKAHVTDYSNASRTLMFNIHDLQWDDELLEMLTVPKSMLPEVRPSSEIYGETIDYHFFGQNVPIAGVAGDQQAALFGQACFGEGMAKNTYGTGCFMLMNTGEKAVASEHGLLTTIAWGIDGKVNYALEGSIFVAGSAIQWLRDGMRMFKDASESEVYASRVESTDGVYVVPAFVGLGTPYWDSEVRGAMFGVTRGTTKEHFIRATLESLAYQTKDVLCAMEADSGIELKTLRVDGGAVKNNFLMKFQSDILDVPVERPVINETTALGAAYLAGLAVGYWKNQDEIKEQWHMDKRFEPTMEAKTSEELYAGWKKAIEATKAFK.

Position 12 (Thr-12) interacts with ADP. Residues Thr-12, Thr-13, and Ser-14 each coordinate ATP. Thr-12 is a sn-glycerol 3-phosphate binding site. Arg-16 is a binding site for ADP. Sn-glycerol 3-phosphate is bound by residues Arg-82, Glu-83, and Tyr-134. 3 residues coordinate glycerol: Arg-82, Glu-83, and Tyr-134. Residue His-230 is modified to Phosphohistidine; by HPr. Asp-244 is a sn-glycerol 3-phosphate binding site. Residues Asp-244 and Gln-245 each coordinate glycerol. Thr-266 and Gly-309 together coordinate ADP. Positions 266, 309, 313, and 410 each coordinate ATP. Positions 410 and 414 each coordinate ADP.

It belongs to the FGGY kinase family. Homotetramer and homodimer (in equilibrium). Post-translationally, the phosphoenolpyruvate-dependent sugar phosphotransferase system (PTS), including enzyme I, and histidine-containing protein (HPr) are required for the phosphorylation, which leads to the activation of the enzyme.

It carries out the reaction glycerol + ATP = sn-glycerol 3-phosphate + ADP + H(+). It functions in the pathway polyol metabolism; glycerol degradation via glycerol kinase pathway; sn-glycerol 3-phosphate from glycerol: step 1/1. Activated by phosphorylation and inhibited by fructose 1,6-bisphosphate (FBP). In terms of biological role, key enzyme in the regulation of glycerol uptake and metabolism. Catalyzes the phosphorylation of glycerol to yield sn-glycerol 3-phosphate. This is Glycerol kinase from Bacillus cereus (strain ATCC 14579 / DSM 31 / CCUG 7414 / JCM 2152 / NBRC 15305 / NCIMB 9373 / NCTC 2599 / NRRL B-3711).